Reading from the N-terminus, the 396-residue chain is tRNA-specific 2-thiouridylase MnmA (396 aa).

ATP is bound by residues G11–S18 and M37. Residues N97 to D99 are interaction with target base in tRNA. Catalysis depends on C102, which acts as the Nucleophile. Cysteines 102 and 225 form a disulfide. An ATP-binding site is contributed by G126. An interaction with tRNA region spans residues K175 to Q177. C225 functions as the Cysteine persulfide intermediate in the catalytic mechanism. Residues R343 to Y344 are interaction with tRNA.

Belongs to the MnmA/TRMU family.

Its subcellular location is the cytoplasm. The enzyme catalyses S-sulfanyl-L-cysteinyl-[protein] + uridine(34) in tRNA + AH2 + ATP = 2-thiouridine(34) in tRNA + L-cysteinyl-[protein] + A + AMP + diphosphate + H(+). In terms of biological role, catalyzes the 2-thiolation of uridine at the wobble position (U34) of tRNA, leading to the formation of s(2)U34. The protein is tRNA-specific 2-thiouridylase MnmA of Methylibium petroleiphilum (strain ATCC BAA-1232 / LMG 22953 / PM1).